Consider the following 275-residue polypeptide: Large ribosomal subunit protein uL2 (275 aa).

The tract at residues 224–257 (AMNPIDHPHGGGEGRTAAGRDPVSPWGTPTKGFR) is disordered.

The protein belongs to the universal ribosomal protein uL2 family. In terms of assembly, part of the 50S ribosomal subunit. Forms a bridge to the 30S subunit in the 70S ribosome.

One of the primary rRNA binding proteins. Required for association of the 30S and 50S subunits to form the 70S ribosome, for tRNA binding and peptide bond formation. It has been suggested to have peptidyltransferase activity; this is somewhat controversial. Makes several contacts with the 16S rRNA in the 70S ribosome. This Burkholderia mallei (strain NCTC 10247) protein is Large ribosomal subunit protein uL2.